The primary structure comprises 1307 residues: Rab3 GTPase-activating protein regulatory subunit (1307 aa).

The protein belongs to the Rab3-GAP regulatory subunit family. As to quaternary structure, the Rab3 GTPase-activating complex is a heterodimer composed of rbg-1 and rbg-2.

The protein localises to the cytoplasm. Its function is as follows. Probable regulatory subunit of a GTPase activating protein that has specificity for Rab3 subfamily. Rab3 proteins are involved in regulated exocytosis of neurotransmitters and hormones. Rab3 GTPase-activating complex specifically converts active Rab3-GTP to the inactive form Rab3-GDP. This Caenorhabditis elegans protein is Rab3 GTPase-activating protein regulatory subunit (rbg-2).